A 165-amino-acid chain; its full sequence is Anterior gradient protein 3 (165 aa).

A signal peptide spans 1 to 20; sequence MLHSALALCLLLITVSSNLA. The Prevents secretion from ER signature appears at 162–165; that stretch reads QSEL.

It belongs to the AGR family. In terms of assembly, interacts with LYPD3 and DAG1 (alphaDAG1). In terms of tissue distribution, expressed in the ciliated cells of the airway epithelium. Not detected in the mucous cells.

Its subcellular location is the endoplasmic reticulum. The protein resides in the cytoplasm. Required for calcium-mediated regulation of ciliary beat frequency and mucociliary clearance in the airway. Might be involved in the regulation of intracellular calcium in tracheal epithelial cells. The sequence is that of Anterior gradient protein 3 from Mus musculus (Mouse).